A 319-amino-acid chain; its full sequence is Annexin D4 (319 aa).

2 Annexin repeats span residues 1 to 75 (MALP…EFSR) and 86 to 157 (HPWE…GLVS). The Ca(2+) site is built by Gly19, Gly21, and Glu72. Thr115 carries the post-translational modification Phosphothreonine. Tyr159 and Tyr211 each carry phosphotyrosine. Annexin repeat units follow at residues 169 to 240 (DSAK…ICLL) and 241 to 316 (KPAL…TLLS). A Phosphoserine modification is found at Ser277. Phosphotyrosine is present on Tyr287.

The protein belongs to the annexin (TC 1.A.31.1) family. In terms of tissue distribution, expressed mainly in roots and flowers. Lower in stems and leaves.

Functionally, may be involved in osmotic stress and abscisic acid signaling in a calcium-dependent manner. This is Annexin D4 (ANN4) from Arabidopsis thaliana (Mouse-ear cress).